The primary structure comprises 761 residues: Phosphoribosylformylglycinamidine synthase subunit PurL (761 aa).

The active site involves H58. ATP contacts are provided by Y61 and K105. E107 serves as a coordination point for Mg(2+). Substrate-binding positions include 108–111 (SHNH) and R130. H109 (proton acceptor) is an active-site residue. D131 is a binding site for Mg(2+). Q259 is a binding site for substrate. Residue D287 coordinates Mg(2+). 331 to 333 (ESQ) serves as a coordination point for substrate. ATP is bound by residues N519 and G556. N557 contacts Mg(2+). S559 contacts substrate.

This sequence belongs to the FGAMS family. In terms of assembly, monomer. Part of the FGAM synthase complex composed of 1 PurL, 1 PurQ and 2 PurS subunits.

It localises to the cytoplasm. The enzyme catalyses N(2)-formyl-N(1)-(5-phospho-beta-D-ribosyl)glycinamide + L-glutamine + ATP + H2O = 2-formamido-N(1)-(5-O-phospho-beta-D-ribosyl)acetamidine + L-glutamate + ADP + phosphate + H(+). It participates in purine metabolism; IMP biosynthesis via de novo pathway; 5-amino-1-(5-phospho-D-ribosyl)imidazole from N(2)-formyl-N(1)-(5-phospho-D-ribosyl)glycinamide: step 1/2. Part of the phosphoribosylformylglycinamidine synthase complex involved in the purines biosynthetic pathway. Catalyzes the ATP-dependent conversion of formylglycinamide ribonucleotide (FGAR) and glutamine to yield formylglycinamidine ribonucleotide (FGAM) and glutamate. The FGAM synthase complex is composed of three subunits. PurQ produces an ammonia molecule by converting glutamine to glutamate. PurL transfers the ammonia molecule to FGAR to form FGAM in an ATP-dependent manner. PurS interacts with PurQ and PurL and is thought to assist in the transfer of the ammonia molecule from PurQ to PurL. The sequence is that of Phosphoribosylformylglycinamidine synthase subunit PurL from Rhodococcus jostii (strain RHA1).